The sequence spans 1165 residues: Leptin receptor (1165 aa).

The N-terminal stretch at 1–21 (MTCPKFSVALLHWEFIYVITA) is a signal peptide. Topologically, residues 22–838 (FDLAYPITPW…TQDGEKHRND (817 aa)) are extracellular. Cystine bridges form between Cys37–Cys90, Cys89–Cys99, Cys131–Cys142, Cys186–Cys196, and Cys188–Cys193. Asn41, Asn55, Asn72, Asn80, and Asn98 each carry an N-linked (GlcNAc...) asparagine glycan. Asn187 carries an N-linked (GlcNAc...) asparagine glycan. Residues Asn206, Asn276, Asn347, and Asn397 are each glycosylated (N-linked (GlcNAc...) asparagine). In terms of domain architecture, Fibronectin type-III 1 spans 239-332 (PPLGLHMEIT…STPFTFTTQD (94 aa)). Cystine bridges form between Cys352/Cys412 and Cys413/Cys418. Asn433 carries an N-linked (GlcNAc...) asparagine glycan. 3 disulfides stabilise this stretch: Cys436–Cys447, Cys473–Cys528, and Cys488–Cys498. Residues 467–484 (HRSSLYCSDVPSVHPISE) form a leptin-binding region. Fibronectin type-III domains lie at 539–634 (PPSS…TVVT), 642–736 (GPEF…WPMS), and 740–834 (IVQS…DGEK). The short motif at 622-626 (WSNWS) is the WSXWS motif element. Asn624, Asn659, Asn670, Asn697, Asn728, and Asn750 each carry an N-linked (GlcNAc...) asparagine glycan. The chain crosses the membrane as a helical span at residues 839–861 (AGLYVIVPIIISSSILLLGTLLM). Over 862–1165 (SHQRMKKLFW…MENKMYDLTV (304 aa)) the chain is Cytoplasmic. Residues 870 to 878 (FWEDVPNPK) carry the Box 1 motif motif. Position 881 is a phosphoserine (Ser881). The tract at residues 892–897 (ETFEHL) is required for JAK2 activation. A required for STAT3 phosphorylation region spans residues 897–905 (LFIKHTESV). Residue Tyr986 is modified to Phosphotyrosine; by JAK2. Tyr1079 carries the phosphotyrosine modification. Tyr1141 is subject to Phosphotyrosine; by JAK2.

The protein belongs to the type I cytokine receptor family. Type 2 subfamily. As to quaternary structure, present as a mixture of monomers and dimers. The phosphorylated receptor binds a number of SH2 domain-containing proteins such as JAK2, STAT3, PTPN11, and SOCS3. Interaction with SOCS3 inhibits JAK/STAT signaling and MAPK cascade. Post-translationally, on ligand binding, phosphorylated on two conserved C-terminal tyrosine residues by JAK2. Tyr-986 is required for complete binding and activation of PTPN11, ERK/FOS activation,for interaction with SOCS3 and SOCS3 mediated inhibition of leptin signaling. Phosphorylation on Tyr-1141 is required for STAT3 binding/activation. Phosphorylation of Tyr-1079 has a more accessory role. In terms of tissue distribution, kidney, liver, spleen, lung, brain, testis, uterus, ovary, corpus luteum, theca and granulosa cells.

It is found in the cell membrane. The protein resides in the basolateral cell membrane. In terms of biological role, receptor for hormone LEP/leptin. On ligand binding, mediates LEP central and peripheral effects through the activation of different signaling pathways such as JAK2/STAT3 and MAPK cascade/FOS. In the hypothalamus, LEP acts as an appetite-regulating factor that induces a decrease in food intake and an increase in energy consumption by inducing anorexinogenic factors and suppressing orexigenic neuropeptides, also regulates bone mass and secretion of hypothalamo-pituitary-adrenal hormones. In the periphery, increases basal metabolism, influences reproductive function, regulates pancreatic beta-cell function and insulin secretion, is pro-angiogenic and affects innate and adaptive immunity. Control of energy homeostasis and melanocortin production (stimulation of POMC and full repression of AgRP transcription) is mediated by STAT3 signaling, whereas distinct signals regulate NPY and the control of fertility, growth and glucose homeostasis. Involved in the regulation of counter-regulatory response to hypoglycemia by inhibiting neurons of the parabrachial nucleus. Has a specific effect on T lymphocyte responses, differentially regulating the proliferation of naive and memory T-cells. Leptin increases Th1 and suppresses Th2 cytokine production. The chain is Leptin receptor (LEPR) from Sus scrofa (Pig).